The chain runs to 365 residues: 3-isopropylmalate dehydrogenase (365 aa).

78–91 (GYKWDSLPRSQRPE) contacts NAD(+). R98, R108, R136, and D226 together coordinate substrate. Residues D226, D250, and D254 each contribute to the Mg(2+) site. 284-296 (GSAPDIAGQDKAN) contributes to the NAD(+) binding site.

It belongs to the isocitrate and isopropylmalate dehydrogenases family. LeuB type 1 subfamily. Homodimer. The cofactor is Mg(2+). It depends on Mn(2+) as a cofactor.

Its subcellular location is the cytoplasm. The catalysed reaction is (2R,3S)-3-isopropylmalate + NAD(+) = 4-methyl-2-oxopentanoate + CO2 + NADH. The protein operates within amino-acid biosynthesis; L-leucine biosynthesis; L-leucine from 3-methyl-2-oxobutanoate: step 3/4. Its function is as follows. Catalyzes the oxidation of 3-carboxy-2-hydroxy-4-methylpentanoate (3-isopropylmalate) to 3-carboxy-4-methyl-2-oxopentanoate. The product decarboxylates to 4-methyl-2 oxopentanoate. This chain is 3-isopropylmalate dehydrogenase, found in Synechococcus elongatus (strain ATCC 33912 / PCC 7942 / FACHB-805) (Anacystis nidulans R2).